The chain runs to 160 residues: Ribosomal RNA large subunit methyltransferase H (160 aa).

Residues leucine 76, glycine 108, and 127-132 (FGFMTW) each bind S-adenosyl-L-methionine.

It belongs to the RNA methyltransferase RlmH family. As to quaternary structure, homodimer.

The protein localises to the cytoplasm. The enzyme catalyses pseudouridine(1915) in 23S rRNA + S-adenosyl-L-methionine = N(3)-methylpseudouridine(1915) in 23S rRNA + S-adenosyl-L-homocysteine + H(+). Its function is as follows. Specifically methylates the pseudouridine at position 1915 (m3Psi1915) in 23S rRNA. This Bartonella tribocorum (strain CIP 105476 / IBS 506) protein is Ribosomal RNA large subunit methyltransferase H.